We begin with the raw amino-acid sequence, 601 residues long: ATP-dependent lipid A-core flippase (601 aa).

A run of 6 helical transmembrane segments spans residues 35–55, 77–97, 150–170, 173–193, 263–283, and 286–306; these read FAVAMVCMLIAGALTSSLAFL, LAIILIYLVKGGCSYFQAILM, AVTSLMKDSFTLICLVFVIFY, WQLAIIAMIVFPLTIYPIAKF, MEFLGGIGIAAIIFYGGYQVI, and SSTPGTFFSFLTALIMLYEPV. Residues 36–318 form the ABC transmembrane type-1 domain; that stretch reads AVAMVCMLIA…LTNVNNTIQQ (283 aa). One can recognise an ABC transporter domain in the interval 352-585; it reads IEIRNISFAY…RGEYYKLHQL (234 aa). 384 to 391 provides a ligand contact to ATP; it reads GMSGGGKT.

This sequence belongs to the ABC transporter superfamily. Lipid exporter (TC 3.A.1.106) family. As to quaternary structure, homodimer.

It localises to the cell inner membrane. It carries out the reaction ATP + H2O + lipid A-core oligosaccharideSide 1 = ADP + phosphate + lipid A-core oligosaccharideSide 2.. Its function is as follows. Involved in lipopolysaccharide (LPS) biosynthesis. Translocates lipid A-core from the inner to the outer leaflet of the inner membrane. Transmembrane domains (TMD) form a pore in the inner membrane and the ATP-binding domain (NBD) is responsible for energy generation. The sequence is that of ATP-dependent lipid A-core flippase from Syntrophus aciditrophicus (strain SB).